Reading from the N-terminus, the 249-residue chain is Metallo-beta-lactamase type 2 (249 aa).

The first 22 residues, 1–22 (MLKRLKGLLVLALGFTGLQVFG), serve as a signal peptide directing secretion. Positions 98, 100, 102, 161, and 180 each coordinate Zn(2+). Lys183 is a binding site for substrate. Residue His222 coordinates Zn(2+).

The protein belongs to the metallo-beta-lactamase superfamily. Class-B beta-lactamase family. Monomer. Requires Zn(2+) as cofactor.

The protein localises to the periplasm. It catalyses the reaction a beta-lactam + H2O = a substituted beta-amino acid. In terms of biological role, confers resistance to the different beta-lactams antibiotics (penicillin, cephalosporin and carbapenem) via the hydrolysis of the beta-lactam ring. In Elizabethkingia meningoseptica (Chryseobacterium meningosepticum), this protein is Metallo-beta-lactamase type 2 (blaB5).